A 380-amino-acid chain; its full sequence is High affinity transport system protein p37 (380 aa).

Residues 1-26 (MLKRKKLLQGFLKFLPLIIPATIFVS) form the signal peptide. A lipid anchor (N-palmitoyl cysteine) is attached at Cys27. A lipid anchor (S-diacylglycerol cysteine) is attached at Cys27. Positions 285 to 304 (NHFYTPTENNGKGDSEKSNN) are disordered.

The protein localises to the cell membrane. P37 is part of a high-affinity transport system. This Mycoplasma pneumoniae (strain ATCC 29342 / M129 / Subtype 1) (Mycoplasmoides pneumoniae) protein is High affinity transport system protein p37 (p37).